The sequence spans 247 residues: Membrane-embedded CAAX protease MroQ (247 aa).

Residues 1-17 form the signal peptide; it reads MTRLWASLLTVIIYILS. 3 helical membrane-spanning segments follow: residues 42 to 62, 81 to 101, and 119 to 139; these read VIYI…LINL, IIPW…VVSI, and LIII…IGPL. The active site involves E141. A run of 2 helical transmembrane segments spans residues 162–182 and 183–203; these read IVAF…AHND and FKFI…YVWT.

It belongs to the peptidase U48 family.

The protein resides in the membrane. In terms of biological role, participates in the regulation of the Agr quorum sensing activity and plays thereby an important role in virulence. Mechanistically, elicits a protease dependent control of Agr activity without playing a role in the processing of the pheromone-precursor AgrD. This is Membrane-embedded CAAX protease MroQ (mroQ) from Staphylococcus aureus (strain USA300).